Consider the following 67-residue polypeptide: Large ribosomal subunit protein uL30 (67 aa).

The protein belongs to the universal ribosomal protein uL30 family. As to quaternary structure, part of the 50S ribosomal subunit.

The protein is Large ribosomal subunit protein uL30 of Hamiltonella defensa subsp. Acyrthosiphon pisum (strain 5AT).